We begin with the raw amino-acid sequence, 815 residues long: Translation initiation factor IF-2 (815 aa).

Over residues 153-176 the composition is skewed to basic and acidic residues; it reads VQEKEAEKKVEKLKTADKPKEGNK. Residues 153–219 form a disordered region; it reads VQEKEAEKKV…THLSQKIQAE (67 aa). Residues 191–209 are compositionally biased toward basic residues; it reads KQLHVARHNPNRRLKKKDR. The tr-type G domain maps to 315-482; the sequence is ARPPIVTIMG…AISLTAEILE (168 aa). The G1 stretch occupies residues 324 to 331; that stretch reads GHVDHGKT. 324-331 contacts GTP; it reads GHVDHGKT. Positions 349 to 353 are G2; the sequence is GITQH. The interval 370 to 373 is G3; it reads DTPG. GTP contacts are provided by residues 370-374 and 424-427; these read DTPGH and NKID. A G4 region spans residues 424–427; the sequence is NKID. Residues 460-462 form a G5 region; that stretch reads SAH.

The protein belongs to the TRAFAC class translation factor GTPase superfamily. Classic translation factor GTPase family. IF-2 subfamily.

It is found in the cytoplasm. In terms of biological role, one of the essential components for the initiation of protein synthesis. Protects formylmethionyl-tRNA from spontaneous hydrolysis and promotes its binding to the 30S ribosomal subunits. Also involved in the hydrolysis of GTP during the formation of the 70S ribosomal complex. The chain is Translation initiation factor IF-2 from Vesicomyosocius okutanii subsp. Calyptogena okutanii (strain HA).